Here is a 454-residue protein sequence, read N- to C-terminus: Bifunctional protein GlmU (454 aa).

The tract at residues 1-226 (MSLEIVILAA…AMEVQGVNDR (226 aa)) is pyrophosphorylase. UDP-N-acetyl-alpha-D-glucosamine is bound by residues 8–11 (LAAG), lysine 22, glutamine 73, 78–79 (GT), 99–101 (YGD), glycine 136, glutamate 151, asparagine 166, and asparagine 224. Aspartate 101 is a Mg(2+) binding site. Position 224 (asparagine 224) interacts with Mg(2+). A linker region spans residues 227–247 (MQQAQLERHYQRLRAEELMRQ). The interval 248-454 (GVTLLDPQRL…NWKRPEKIKK (207 aa)) is N-acetyltransferase. 2 residues coordinate UDP-N-acetyl-alpha-D-glucosamine: arginine 330 and lysine 348. Catalysis depends on histidine 360, which acts as the Proton acceptor. UDP-N-acetyl-alpha-D-glucosamine-binding residues include tyrosine 363 and asparagine 374. Acetyl-CoA contacts are provided by residues alanine 377, 383-384 (NY), serine 402, alanine 420, and arginine 437.

This sequence in the N-terminal section; belongs to the N-acetylglucosamine-1-phosphate uridyltransferase family. It in the C-terminal section; belongs to the transferase hexapeptide repeat family. In terms of assembly, homotrimer. Requires Mg(2+) as cofactor.

The protein localises to the cytoplasm. It catalyses the reaction alpha-D-glucosamine 1-phosphate + acetyl-CoA = N-acetyl-alpha-D-glucosamine 1-phosphate + CoA + H(+). It carries out the reaction N-acetyl-alpha-D-glucosamine 1-phosphate + UTP + H(+) = UDP-N-acetyl-alpha-D-glucosamine + diphosphate. Its pathway is nucleotide-sugar biosynthesis; UDP-N-acetyl-alpha-D-glucosamine biosynthesis; N-acetyl-alpha-D-glucosamine 1-phosphate from alpha-D-glucosamine 6-phosphate (route II): step 2/2. The protein operates within nucleotide-sugar biosynthesis; UDP-N-acetyl-alpha-D-glucosamine biosynthesis; UDP-N-acetyl-alpha-D-glucosamine from N-acetyl-alpha-D-glucosamine 1-phosphate: step 1/1. It participates in bacterial outer membrane biogenesis; LPS lipid A biosynthesis. Its function is as follows. Catalyzes the last two sequential reactions in the de novo biosynthetic pathway for UDP-N-acetylglucosamine (UDP-GlcNAc). The C-terminal domain catalyzes the transfer of acetyl group from acetyl coenzyme A to glucosamine-1-phosphate (GlcN-1-P) to produce N-acetylglucosamine-1-phosphate (GlcNAc-1-P), which is converted into UDP-GlcNAc by the transfer of uridine 5-monophosphate (from uridine 5-triphosphate), a reaction catalyzed by the N-terminal domain. The chain is Bifunctional protein GlmU from Pseudomonas aeruginosa (strain ATCC 15692 / DSM 22644 / CIP 104116 / JCM 14847 / LMG 12228 / 1C / PRS 101 / PAO1).